The chain runs to 154 residues: MLGLRRSATTLFDISQSLLRNVTFHGLRVQGIRVGNAEVPNNKPLKTGLQEVYGIGRRKSHQVLCHLGITNKLARDLTGKELIDLREEVGQHQHGDELRRRVGSEIQRLVEVDCYRGSRHRHGLPCRGQRTSTNARTKKGKAVAIAGKKKAPRK.

The transit peptide at 1-30 (MLGLRRSATTLFDISQSLLRNVTFHGLRVQ) directs the protein to the mitochondrion. A disordered region spans residues 121–154 (RHGLPCRGQRTSTNARTKKGKAVAIAGKKKAPRK). The span at 136 to 154 (RTKKGKAVAIAGKKKAPRK) shows a compositional bias: basic residues.

It belongs to the universal ribosomal protein uS13 family. As to quaternary structure, part of the small ribosomal subunit.

The protein localises to the mitochondrion. Located at the top of the head of the small subunit, it contacts several helices of the 18S rRNA. This is Small ribosomal subunit protein uS13m (RPS13) from Arabidopsis thaliana (Mouse-ear cress).